The sequence spans 149 residues: Calmodulin (149 aa).

Alanine 2 is subject to N-acetylalanine. EF-hand domains follow at residues 8–43, 44–79, 81–116, and 117–149; these read EQIA…LGQN, PTEA…KMKD, DSEE…LGEK, and LTDE…MTAK. The Ca(2+) site is built by aspartate 21, aspartate 23, aspartate 25, threonine 27, glutamate 32, aspartate 57, aspartate 59, asparagine 61, threonine 63, glutamate 68, aspartate 94, aspartate 96, asparagine 98, tyrosine 100, and glutamate 105. Lysine 116 carries the N6,N6,N6-trimethyllysine modification. Residues aspartate 130, aspartate 132, aspartate 134, glutamine 136, and glutamate 141 each coordinate Ca(2+).

The protein belongs to the calmodulin family.

Calmodulin acts as part of a calcium signal transduction pathway by mediating the control of a large number of enzymes, ion channels, aquaporins and other proteins through calcium-binding. Calcium-binding is required for the activation of calmodulin. Among the enzymes to be stimulated by the calmodulin-calcium complex are a number of protein kinases, such as myosin light-chain kinases and calmodulin-dependent protein kinase type II (CaMK2), and phosphatases. In Electrophorus electricus (Electric eel), this protein is Calmodulin (calm).